A 90-amino-acid polypeptide reads, in one-letter code: UPF0335 protein RPA4190 (90 aa).

It belongs to the UPF0335 family.

This is UPF0335 protein RPA4190 from Rhodopseudomonas palustris (strain ATCC BAA-98 / CGA009).